The chain runs to 365 residues: Protein RecA (365 aa).

Residue 73-80 participates in ATP binding; that stretch reads GPESSGKT.

This sequence belongs to the RecA family.

The protein resides in the cytoplasm. In terms of biological role, can catalyze the hydrolysis of ATP in the presence of single-stranded DNA, the ATP-dependent uptake of single-stranded DNA by duplex DNA, and the ATP-dependent hybridization of homologous single-stranded DNAs. It interacts with LexA causing its activation and leading to its autocatalytic cleavage. The chain is Protein RecA from Prochlorococcus marinus (strain MIT 9301).